We begin with the raw amino-acid sequence, 505 residues long: Kinesin light chain 3 (505 aa).

Residues 1–20 (MSVQVAAPGGLGLGLERPSP) are disordered. Residues 88–150 (LLALSAHVGA…EEEKSHLEFL (63 aa)) are a coiled coil. The disordered stretch occupies residues 157 to 193 (DPPAESQQPESPPRRDSLASLFPSEEEERRGPEAVGA). Position 173 is a phosphoserine (S173). 5 TPR repeats span residues 207 to 240 (LRTL…LERS), 249 to 282 (ATML…REQT), 291 to 324 (AATL…REKV), 333 to 366 (AKQL…YEAL), and 375 to 408 (AKTK…EALP). The tract at residues 409–505 (APLGAPNTGT…STSTQDLGPR (97 aa)) is disordered. Residues 416 to 434 (TGTTSDTQQQTLSRSSSFS) show a composition bias toward low complexity. Basic and acidic residues predominate over residues 435–453 (KLRESIRRGSEKLVSRLRG). The residue at position 467 (S467) is a Phosphoserine. The segment covering 489–505 (SEASRTLSTSTQDLGPR) has biased composition (polar residues). Position 499 is a phosphothreonine (T499).

Belongs to the kinesin light chain family. As to quaternary structure, oligomer composed of two heavy chains and two light chains. Associates with microtubulin in an ATP-dependent manner. Interacts with KIF5C. Interacts with ODF1. Interacts with LRGUK. Interacts with VDAC2.

The protein localises to the cytoplasm. It is found in the cytoskeleton. The protein resides in the mitochondrion. In terms of biological role, kinesin is a microtubule-associated force-producing protein that may play a role in organelle transport. Plays a role during spermiogenesis in the development of the sperm tail midpiece and in the normal function of spermatozoa. May play a role in the formation of the mitochondrial sheath formation in the developing spermatid midpiece. The chain is Kinesin light chain 3 (KLC3) from Bos taurus (Bovine).